Reading from the N-terminus, the 229-residue chain is Large ribosomal subunit protein uL1 (229 aa).

The protein belongs to the universal ribosomal protein uL1 family. Part of the 50S ribosomal subunit.

Its function is as follows. Binds directly to 23S rRNA. The L1 stalk is quite mobile in the ribosome, and is involved in E site tRNA release. Protein L1 is also a translational repressor protein, it controls the translation of the L11 operon by binding to its mRNA. The polypeptide is Large ribosomal subunit protein uL1 (Lactococcus lactis subsp. lactis (strain IL1403) (Streptococcus lactis)).